Reading from the N-terminus, the 344-residue chain is MTSNFSQPALQLCYENTNGSCIKTPYSPGPRVILYMVFGFGAVLAVCGNLLVVISVLHFKQLHSPANFLIASLASADFLVGISVMPFSMVRSIESCWYFGDAFCSLHSCCDVAFCYSSALHLCFISVDRYIAVTDPLVYPTKFTVSVSGICISISWILPLVYSSAVFYTGISAKGIESLVSALNCVGGCQIVVNQDWVLIDFLLFFIPTLVMIILYSKIFLVAKQQAVKIETSVSDNRGESSSESHKARVAKRERKAAKTLGVTVVAFMVSWLPYTIDSLVDAFVGFITPAYVYEICCWSAYYNSAMNPLIYAFFYPWFRKAIKLILSGEILKSHSSTMSLFSE.

At 1–31 (MTSNFSQPALQLCYENTNGSCIKTPYSPGPR) the chain is on the extracellular side. N-linked (GlcNAc...) asparagine glycans are attached at residues Asn-4 and Asn-18. 2 cysteine pairs are disulfide-bonded: Cys-21/Cys-185 and Cys-104/Cys-189. A helical transmembrane segment spans residues 32–52 (VILYMVFGFGAVLAVCGNLLV). The Cytoplasmic segment spans residues 53-67 (VISVLHFKQLHSPAN). A helical transmembrane segment spans residues 68–88 (FLIASLASADFLVGISVMPFS). Residues 89–111 (MVRSIESCWYFGDAFCSLHSCCD) are Extracellular-facing. Residues 112–132 (VAFCYSSALHLCFISVDRYIA) form a helical membrane-spanning segment. Over 133 to 146 (VTDPLVYPTKFTVS) the chain is Cytoplasmic. The helical transmembrane segment at 147-167 (VSGICISISWILPLVYSSAVF) threads the bilayer. The Extracellular portion of the chain corresponds to 168–195 (YTGISAKGIESLVSALNCVGGCQIVVNQ). The helical transmembrane segment at 196–216 (DWVLIDFLLFFIPTLVMIILY) threads the bilayer. Residues 217-260 (SKIFLVAKQQAVKIETSVSDNRGESSSESHKARVAKRERKAAKT) lie on the Cytoplasmic side of the membrane. The helical transmembrane segment at 261 to 281 (LGVTVVAFMVSWLPYTIDSLV) threads the bilayer. Residue Asp-282 is a topological domain, extracellular. Residues 283 to 303 (AFVGFITPAYVYEICCWSAYY) form a helical membrane-spanning segment. Over 304–344 (NSAMNPLIYAFFYPWFRKAIKLILSGEILKSHSSTMSLFSE) the chain is Cytoplasmic.

Belongs to the G-protein coupled receptor 1 family. Specifically expressed in neurons of the olfactory epithelium.

The protein resides in the cell membrane. Olfactory receptor specific for trace amines. Trace amine compounds are enriched in animal body fluids and act on trace amine-associated receptors (TAARs) to elicit both intraspecific and interspecific innate behaviors. Ligand-binding causes a conformation change that triggers signaling via G alpha proteins, possibly G(i)/G(o) G alpha proteins. The chain is Trace amine-associated receptor 8b from Mus musculus (Mouse).